The primary structure comprises 303 residues: T-box protein 38 (303 aa).

Positions L14 to S195 form a DNA-binding region, T-box. Positions F193 to S225 are disordered. Residues D204–P213 are compositionally biased toward low complexity.

The protein resides in the nucleus. In terms of biological role, transcription factor. Required for mesodermal induction, acting redundantly with transcription factor tbx-37. Together with tbx-37, acts by inducing cell fates in the AB lineage, thereby playing a role in development of the anterior pharynx. The sequence is that of T-box protein 38 (tbx-38) from Caenorhabditis elegans.